The chain runs to 265 residues: Hydroxyethylthiazole kinase (265 aa).

A substrate-binding site is contributed by M43. ATP is bound by residues R119 and S165. Residue A192 participates in substrate binding.

It belongs to the Thz kinase family. Requires Mg(2+) as cofactor.

It catalyses the reaction 5-(2-hydroxyethyl)-4-methylthiazole + ATP = 4-methyl-5-(2-phosphooxyethyl)-thiazole + ADP + H(+). It participates in cofactor biosynthesis; thiamine diphosphate biosynthesis; 4-methyl-5-(2-phosphoethyl)-thiazole from 5-(2-hydroxyethyl)-4-methylthiazole: step 1/1. Functionally, catalyzes the phosphorylation of the hydroxyl group of 4-methyl-5-beta-hydroxyethylthiazole (THZ). In Haemophilus influenzae (strain 86-028NP), this protein is Hydroxyethylthiazole kinase.